The following is a 343-amino-acid chain: UDP-3-O-acylglucosamine N-acyltransferase (343 aa).

Residue H238 is the Proton acceptor of the active site.

It belongs to the transferase hexapeptide repeat family. LpxD subfamily. As to quaternary structure, homotrimer.

It catalyses the reaction a UDP-3-O-[(3R)-3-hydroxyacyl]-alpha-D-glucosamine + a (3R)-hydroxyacyl-[ACP] = a UDP-2-N,3-O-bis[(3R)-3-hydroxyacyl]-alpha-D-glucosamine + holo-[ACP] + H(+). Its pathway is bacterial outer membrane biogenesis; LPS lipid A biosynthesis. Its function is as follows. Catalyzes the N-acylation of UDP-3-O-acylglucosamine using 3-hydroxyacyl-ACP as the acyl donor. Is involved in the biosynthesis of lipid A, a phosphorylated glycolipid that anchors the lipopolysaccharide to the outer membrane of the cell. This is UDP-3-O-acylglucosamine N-acyltransferase from Marinomonas sp. (strain MWYL1).